Here is a 140-residue protein sequence, read N- to C-terminus: Vacuolar protein sorting-associated protein 55 homolog (140 aa).

Over Met1–Lys16 the chain is Cytoplasmic. Residues Ile17–Leu37 form a helical membrane-spanning segment. Residues Phe38–Asn40 lie on the Lumenal side of the membrane. Residues Trp41–Gly61 traverse the membrane as a helical segment. Residues Gly62–Ser75 lie on the Cytoplasmic side of the membrane. A helical membrane pass occupies residues Trp76–Leu98. The Lumenal portion of the chain corresponds to Lys99–Ala108. A helical membrane pass occupies residues Leu109–Ile129. Residues Gly130–Ile140 are Cytoplasmic-facing.

This sequence belongs to the OB-RGRP/VPS55 family.

The protein resides in the endosome membrane. Functionally, involved in endosomal protein transport. The protein is Vacuolar protein sorting-associated protein 55 homolog of Arabidopsis thaliana (Mouse-ear cress).